The chain runs to 293 residues: Ribosomal RNA small subunit methyltransferase A (293 aa).

The S-adenosyl-L-methionine site is built by Asn-33, Val-35, Gly-60, Glu-81, Asp-111, and Asn-130.

Belongs to the class I-like SAM-binding methyltransferase superfamily. rRNA adenine N(6)-methyltransferase family. RsmA subfamily.

It localises to the cytoplasm. It carries out the reaction adenosine(1518)/adenosine(1519) in 16S rRNA + 4 S-adenosyl-L-methionine = N(6)-dimethyladenosine(1518)/N(6)-dimethyladenosine(1519) in 16S rRNA + 4 S-adenosyl-L-homocysteine + 4 H(+). In terms of biological role, specifically dimethylates two adjacent adenosines (A1518 and A1519) in the loop of a conserved hairpin near the 3'-end of 16S rRNA in the 30S particle. May play a critical role in biogenesis of 30S subunits. The chain is Ribosomal RNA small subunit methyltransferase A from Corynebacterium glutamicum (strain R).